We begin with the raw amino-acid sequence, 28 residues long: Omega-gliadin (28 aa).

The disordered stretch occupies residues 1-28 (ARQLNPSDQELQSPQQLYPQQPYPQQPY). Residues 9–20 (QELQSPQQLYPQ) are compositionally biased toward low complexity.

The chain is Omega-gliadin from Triticum monococcum (Einkorn wheat).